A 919-amino-acid polypeptide reads, in one-letter code: Chitin synthase 1 (919 aa).

Disordered stretches follow at residues 1–69 (MSYD…SFQT) and 109–134 (NLASQSGFPPSTPCGGPSSYSSALGP). A compositionally biased stretch (low complexity) spans 11–30 (GQGRDYARQQRQQRSYQLSD). Asn187 and Asn556 each carry an N-linked (GlcNAc...) asparagine glycan. A run of 7 helical transmembrane segments spans residues 594-614 (IVLLFSWFALANLWLTFSIII), 630-650 (LVVFHWINQAAKWIYVFFLVL), 668-688 (IASFIVFGILGLYLIFVSLWL), 713-733 (VLIAALAATFGIYLIASILYA), 742-762 (FPQYMMIAPSFINILNVYAFC), 843-863 (LVAFWLLTNGALTVAIENVNG), and 887-919 (IILWATFGLSAFRFIGCLIYWVKRNSTRCFRKT).

It belongs to the chitin synthase family. Class III subfamily.

The protein resides in the cell membrane. Its subcellular location is the cytoplasmic vesicle membrane. The enzyme catalyses [(1-&gt;4)-N-acetyl-beta-D-glucosaminyl](n) + UDP-N-acetyl-alpha-D-glucosamine = [(1-&gt;4)-N-acetyl-beta-D-glucosaminyl](n+1) + UDP + H(+). Polymerizes chitin, a structural polymer of the cell wall and septum, by transferring the sugar moiety of UDP-GlcNAc to the non-reducing end of the growing chitin polymer. The protein is Chitin synthase 1 of Mycosarcoma maydis (Corn smut fungus).